The sequence spans 418 residues: Nisin biosynthesis protein NisC (418 aa).

This sequence to B.subtilis SpaC and S.epidermidis EpiC.

Could be implicated in the processing or the export process of the nisin lantibiotic. The sequence is that of Nisin biosynthesis protein NisC (nisC) from Lactococcus lactis subsp. lactis (Streptococcus lactis).